The sequence spans 648 residues: Protein teflon (648 aa).

The C2H2-type 1 zinc-finger motif lies at 33–56; sequence LYCHFCRDLFTQLPEFLRHLQGAH. Disordered regions lie at residues 76 to 127 and 146 to 170; these read SGEQ…GSQN and EHIN…NSES. Polar residues predominate over residues 85-94; sequence VGHNSSSSDS. Residues 96 to 107 show a composition bias toward basic and acidic residues; sequence GLAKSEDSRATE. The C2H2-type 2; degenerate zinc finger occupies 598–620; the sequence is YFCKCCDDIFTLNEDYIRHLVSQ. Residues 624–647 form a C2H2-type 3 zinc finger; it reads YQCTKCIKTFKYQGHYDKHMRTVH.

It belongs to the Teflon family.

Its subcellular location is the nucleus. It is found in the chromosome. In terms of biological role, specifically required in males for proper segregation of autosomal bivalents at meiosis I. Expression is required in the male germ line prior to spermatocyte stage S4. May have a role as a bridging molecule maintaining adhesion to hold autosome bivalents together via heterochromatic connections. This Drosophila yakuba (Fruit fly) protein is Protein teflon.